The sequence spans 224 residues: Orotate phosphoribosyltransferase (224 aa).

5-phospho-alpha-D-ribose 1-diphosphate is bound by residues Lys26, 73 to 74 (YK), Arg100, Lys101, Lys104, His106, and 127 to 135 (EDVTTAGTS). Residues Thr131 and Arg160 each coordinate orotate.

It belongs to the purine/pyrimidine phosphoribosyltransferase family. PyrE subfamily. As to quaternary structure, homodimer. The cofactor is Mg(2+).

It carries out the reaction orotidine 5'-phosphate + diphosphate = orotate + 5-phospho-alpha-D-ribose 1-diphosphate. The protein operates within pyrimidine metabolism; UMP biosynthesis via de novo pathway; UMP from orotate: step 1/2. In terms of biological role, catalyzes the transfer of a ribosyl phosphate group from 5-phosphoribose 1-diphosphate to orotate, leading to the formation of orotidine monophosphate (OMP). The protein is Orotate phosphoribosyltransferase of Clostridium acetobutylicum (strain ATCC 824 / DSM 792 / JCM 1419 / IAM 19013 / LMG 5710 / NBRC 13948 / NRRL B-527 / VKM B-1787 / 2291 / W).